The chain runs to 287 residues: PIH1 domain-containing protein 1 (287 aa).

This sequence belongs to the PIH1 family.

The protein resides in the nucleus. In terms of biological role, involved in the assembly of C/D box small nucleolar ribonucleoprotein (snoRNP) particles. Recruits the SWI/SNF complex to the core promoter of rRNA genes and enhances pre-rRNA transcription. Mediates interaction of TELO2 with the R2TP complex which is necessary for the stability of MTOR and SMG1. Positively regulates the assembly and activity of the mTORC1 complex. The chain is PIH1 domain-containing protein 1 (pih1d1) from Danio rerio (Zebrafish).